We begin with the raw amino-acid sequence, 100 residues long: Urease subunit gamma (100 aa).

It belongs to the urease gamma subunit family. In terms of assembly, heterotrimer of UreA (gamma), UreB (beta) and UreC (alpha) subunits. Three heterotrimers associate to form the active enzyme.

The protein localises to the cytoplasm. It catalyses the reaction urea + 2 H2O + H(+) = hydrogencarbonate + 2 NH4(+). Its pathway is nitrogen metabolism; urea degradation; CO(2) and NH(3) from urea (urease route): step 1/1. The protein is Urease subunit gamma of Synechococcus sp. (strain CC9605).